The primary structure comprises 372 residues: Putative F-box/kelch-repeat protein At3g22730 (372 aa).

One can recognise an F-box domain in the interval 1-50; it reads MMMSDLSLDLVEEILSRVPATSLKRLRSTCKLWNALFKNPGFTKKQFLKA. Kelch repeat units lie at residues 155-204, 245-293, and 324-372; these read ILRC…SFKG, ALSV…PIRG, and KVYI…IIKE.

This chain is Putative F-box/kelch-repeat protein At3g22730, found in Arabidopsis thaliana (Mouse-ear cress).